A 511-amino-acid polypeptide reads, in one-letter code: Zinc finger CCCH-type with G patch domain-containing protein (511 aa).

Residues 157 to 180 (PCSYYLEGECRFDEARCRYSHGAL) form a C3H1-type zinc finger. The disordered stretch occupies residues 254 to 281 (DQEDELTSEDSSSVNDGSSDEEESDMDD). Positions 271–281 (SSDEEESDMDD) are enriched in acidic residues. A G-patch domain is found at 311–357 (TRGIGSKLMEKMGYIHGTGLGSDGRGIVTPVSAQILPKGRSLDACME). Disordered stretches follow at residues 409–433 (GSDN…QHST) and 478–511 (MHNQ…MFEF). Residues 414–425 (QQAEPEAKKAKA) are compositionally biased toward basic and acidic residues. Residues 478–493 (MHNQKQELATLQAQER) show a composition bias toward polar residues. Residues 494 to 511 (SLSKEQQTRKSKNKMFEF) show a composition bias toward basic and acidic residues.

Its subcellular location is the nucleus. Its function is as follows. Transcription repressor. This Drosophila ananassae (Fruit fly) protein is Zinc finger CCCH-type with G patch domain-containing protein.